A 1437-amino-acid chain; its full sequence is Gag-Pol polyprotein (1437 aa).

Gly2 carries N-myristoyl glycine; by host lipidation. The interaction with Gp41 stretch occupies residues 7–31 (VLSGGELDKWEKIRLRPGGKKKYKL). The interval 8–43 (LSGGELDKWEKIRLRPGGKKKYKLKHIVWASRELER) is interaction with host CALM1. An interaction with host AP3D1 region spans residues 12–19 (ELDKWEKI). Positions 14 to 33 (DKWEKIRLRPGGKKKYKLKH) are interaction with membrane phosphatidylinositol 4,5-bisphosphate and RNA. A Nuclear export signal motif is present at residues 16–22 (WEKIRLR). The short motif at 26–32 (KKKYKLK) is the Nuclear localization signal element. An interaction with membrane phosphatidylinositol 4,5-bisphosphate region spans residues 73-77 (EELRS). Residues 106-129 (EEQNKSKKKAQQAAAAAGTGNSSQ) form a disordered region. Tyr134 is subject to Phosphotyrosine; by host. Residues 191–229 (NTVGGHQAAMQMLKETINEEAAEWDRVHPVHAGPIAPGQ) are interaction with human PPIA/CYPA and NUP153. Positions 279 to 365 (YSPTSILDIR…GGPGHKARVL (87 aa)) are dimerization/Multimerization of capsid protein p24. 2 CCHC-type zinc fingers span residues 392-409 (VKCF…NCRA) and 413-430 (KGCW…DCTE). A dimerization of protease region spans residues 491–495 (PQITL). Residues 510–579 (KEALLDTGAD…TPVNIIGRNL (70 aa)) form the Peptidase A2 domain. Residue Asp515 is the For protease activity; shared with dimeric partner of the active site. 2 dimerization of protease regions span residues 539 to 545 (GIGGFIK) and 578 to 590 (NLLT…LNFP). The region spanning 633 to 823 (EGKISKIGPE…PPFLWMGYEL (191 aa)) is the Reverse transcriptase domain. Residues Asp699, Asp774, and Asp775 each coordinate Mg(2+). Residues 816–824 (FLWMGYELH) form an RT 'primer grip' region. The Tryptophan repeat motif signature appears at 987-1003 (WEAWWMEYWQATWIPEW). The 124-residue stretch at 1023-1146 (IVGAETFYVD…VDKLVSAGIR (124 aa)) folds into the RNase H type-1 domain. Positions 1032, 1067, 1087, and 1138 each coordinate Mg(2+). The Integrase-type zinc-finger motif lies at 1152–1193 (NGIDKAQEEHEKYHSNWRAMASDFNLPPVVAKEIVASCDKCQ). Residues His1161, His1165, Cys1189, and Cys1192 each coordinate Zn(2+). In terms of domain architecture, Integrase catalytic spans 1203-1353 (VDCSPGIWQL…SAGERIVDII (151 aa)). Residues Asp1213, Asp1265, and Glu1301 each coordinate Mg(2+). A DNA-binding region (integrase-type) is located at residues 1372–1419 (FRVYYRDNKDPLWKGPAKLLWKGEGAVVIQDNSDIKVVPRRKAKIIRD).

Homotrimer; further assembles as hexamers of trimers. Interacts with gp41 (via C-terminus). Interacts with host CALM1; this interaction induces a conformational change in the Matrix protein, triggering exposure of the myristate group. Interacts with host AP3D1; this interaction allows the polyprotein trafficking to multivesicular bodies during virus assembly. Part of the pre-integration complex (PIC) which is composed of viral genome, matrix protein, Vpr and integrase. In terms of assembly, homodimer; the homodimer further multimerizes as homohexamers or homopentamers. Interacts with human PPIA/CYPA; This interaction stabilizes the capsid. Interacts with human NUP153. Interacts with host PDZD8; this interaction stabilizes the capsid. Interacts with monkey TRIM5; this interaction destabilizes the capsid. As to quaternary structure, homodimer, whose active site consists of two apposed aspartic acid residues. Heterodimer of p66 RT and p51 RT (RT p66/p51). Heterodimerization of RT is essential for DNA polymerase activity. The overall folding of the subdomains is similar in p66 RT and p51 RT but the spatial arrangements of the subdomains are dramatically different. In terms of assembly, homotetramer; may further associate as a homohexadecamer. Part of the pre-integration complex (PIC) which is composed of viral genome, matrix protein, Vpr and integrase. Interacts with human SMARCB1/INI1 and human PSIP1/LEDGF isoform 1. Interacts with human KPNA3; this interaction might play a role in nuclear import of the pre-integration complex. Interacts with human NUP153; this interaction might play a role in nuclear import of the pre-integration complex. Mg(2+) is required as a cofactor. Post-translationally, specific enzymatic cleavages by the viral protease yield mature proteins. The protease is released by autocatalytic cleavage. The polyprotein is cleaved during and after budding, this process is termed maturation. Proteolytic cleavage of p66 RT removes the RNase H domain to yield the p51 RT subunit. Nucleocapsid protein p7 might be further cleaved after virus entry. In terms of processing, tyrosine phosphorylated presumably in the virion by a host kinase. Phosphorylation is apparently not a major regulator of membrane association. Phosphorylated possibly by host MAPK1; this phosphorylation is necessary for Pin1-mediated virion uncoating. Post-translationally, methylated by host PRMT6, impairing its function by reducing RNA annealing and the initiation of reverse transcription.

The protein localises to the host cell membrane. The protein resides in the host endosome. It localises to the host multivesicular body. Its subcellular location is the virion membrane. It is found in the host nucleus. The protein localises to the host cytoplasm. The protein resides in the virion. The catalysed reaction is Specific for a P1 residue that is hydrophobic, and P1' variable, but often Pro.. It carries out the reaction Endohydrolysis of RNA in RNA/DNA hybrids. Three different cleavage modes: 1. sequence-specific internal cleavage of RNA. Human immunodeficiency virus type 1 and Moloney murine leukemia virus enzymes prefer to cleave the RNA strand one nucleotide away from the RNA-DNA junction. 2. RNA 5'-end directed cleavage 13-19 nucleotides from the RNA end. 3. DNA 3'-end directed cleavage 15-20 nucleotides away from the primer terminus.. It catalyses the reaction 3'-end directed exonucleolytic cleavage of viral RNA-DNA hybrid.. The enzyme catalyses DNA(n) + a 2'-deoxyribonucleoside 5'-triphosphate = DNA(n+1) + diphosphate. Its activity is regulated as follows. Protease: The viral protease is inhibited by many synthetic protease inhibitors (PIs), such as amprenavir, atazanavir, indinavir, loprinavir, nelfinavir, ritonavir and saquinavir. Use of protease inhibitors in tritherapy regimens permit more ambitious therapeutic strategies. Reverse transcriptase/ribonuclease H: RT can be inhibited either by nucleoside RT inhibitors (NRTIs) or by non nucleoside RT inhibitors (NNRTIs). NRTIs act as chain terminators, whereas NNRTIs inhibit DNA polymerization by binding a small hydrophobic pocket near the RT active site and inducing an allosteric change in this region. Classical NRTIs are abacavir, adefovir (PMEA), didanosine (ddI), lamivudine (3TC), stavudine (d4T), tenofovir (PMPA), zalcitabine (ddC), and zidovudine (AZT). Classical NNRTIs are atevirdine (BHAP U-87201E), delavirdine, efavirenz (DMP-266), emivirine (I-EBU), and nevirapine (BI-RG-587). The tritherapies used as a basic effective treatment of AIDS associate two NRTIs and one NNRTI. Mediates, with Gag polyprotein, the essential events in virion assembly, including binding the plasma membrane, making the protein-protein interactions necessary to create spherical particles, recruiting the viral Env proteins, and packaging the genomic RNA via direct interactions with the RNA packaging sequence (Psi). Gag-Pol polyprotein may regulate its own translation, by the binding genomic RNA in the 5'-UTR. At low concentration, the polyprotein would promote translation, whereas at high concentration, the polyprotein would encapsidate genomic RNA and then shut off translation. In terms of biological role, targets the polyprotein to the plasma membrane via a multipartite membrane-binding signal, that includes its myristoylated N-terminus. Matrix protein is part of the pre-integration complex. Implicated in the release from host cell mediated by Vpu. Binds to RNA. Functionally, forms the conical core that encapsulates the genomic RNA-nucleocapsid complex in the virion. Most core are conical, with only 7% tubular. The core is constituted by capsid protein hexamer subunits. The core is disassembled soon after virion entry. Host restriction factors such as TRIM5-alpha or TRIMCyp bind retroviral capsids and cause premature capsid disassembly, leading to blocks in reverse transcription. Capsid restriction by TRIM5 is one of the factors which restricts HIV-1 to the human species. Host PIN1 apparently facilitates the virion uncoating. On the other hand, interactions with PDZD8 or CYPA stabilize the capsid. Its function is as follows. Encapsulates and protects viral dimeric unspliced genomic RNA (gRNA). Binds these RNAs through its zinc fingers. Acts as a nucleic acid chaperone which is involved in rearangement of nucleic acid secondary structure during gRNA retrotranscription. Also facilitates template switch leading to recombination. As part of the polyprotein, participates in gRNA dimerization, packaging, tRNA incorporation and virion assembly. Aspartyl protease that mediates proteolytic cleavages of Gag and Gag-Pol polyproteins during or shortly after the release of the virion from the plasma membrane. Cleavages take place as an ordered, step-wise cascade to yield mature proteins. This process is called maturation. Displays maximal activity during the budding process just prior to particle release from the cell. Also cleaves Nef and Vif, probably concomitantly with viral structural proteins on maturation of virus particles. Hydrolyzes host EIF4GI and PABP1 in order to shut off the capped cellular mRNA translation. The resulting inhibition of cellular protein synthesis serves to ensure maximal viral gene expression and to evade host immune response. Also mediates cleavage of host YTHDF3. Mediates cleavage of host CARD8, thereby activating the CARD8 inflammasome, leading to the clearance of latent HIV-1 in patient CD4(+) T-cells after viral reactivation; in contrast, HIV-1 can evade CARD8-sensing when its protease remains inactive in infected cells prior to viral budding. In terms of biological role, multifunctional enzyme that converts the viral RNA genome into dsDNA in the cytoplasm, shortly after virus entry into the cell. This enzyme displays a DNA polymerase activity that can copy either DNA or RNA templates, and a ribonuclease H (RNase H) activity that cleaves the RNA strand of RNA-DNA heteroduplexes in a partially processive 3' to 5' endonucleasic mode. Conversion of viral genomic RNA into dsDNA requires many steps. A tRNA(3)-Lys binds to the primer-binding site (PBS) situated at the 5'-end of the viral RNA. RT uses the 3' end of the tRNA primer to perform a short round of RNA-dependent minus-strand DNA synthesis. The reading proceeds through the U5 region and ends after the repeated (R) region which is present at both ends of viral RNA. The portion of the RNA-DNA heteroduplex is digested by the RNase H, resulting in a ssDNA product attached to the tRNA primer. This ssDNA/tRNA hybridizes with the identical R region situated at the 3' end of viral RNA. This template exchange, known as minus-strand DNA strong stop transfer, can be either intra- or intermolecular. RT uses the 3' end of this newly synthesized short ssDNA to perform the RNA-dependent minus-strand DNA synthesis of the whole template. RNase H digests the RNA template except for two polypurine tracts (PPTs) situated at the 5'-end and near the center of the genome. It is not clear if both polymerase and RNase H activities are simultaneous. RNase H probably can proceed both in a polymerase-dependent (RNA cut into small fragments by the same RT performing DNA synthesis) and a polymerase-independent mode (cleavage of remaining RNA fragments by free RTs). Secondly, RT performs DNA-directed plus-strand DNA synthesis using the PPTs that have not been removed by RNase H as primers. PPTs and tRNA primers are then removed by RNase H. The 3' and 5' ssDNA PBS regions hybridize to form a circular dsDNA intermediate. Strand displacement synthesis by RT to the PBS and PPT ends produces a blunt ended, linear dsDNA copy of the viral genome that includes long terminal repeats (LTRs) at both ends. Functionally, catalyzes viral DNA integration into the host chromosome, by performing a series of DNA cutting and joining reactions. This enzyme activity takes place after virion entry into a cell and reverse transcription of the RNA genome in dsDNA. The first step in the integration process is 3' processing. This step requires a complex comprising the viral genome, matrix protein, Vpr and integrase. This complex is called the pre-integration complex (PIC). The integrase protein removes 2 nucleotides from each 3' end of the viral DNA, leaving recessed CA OH's at the 3' ends. In the second step, the PIC enters cell nucleus. This process is mediated through integrase and Vpr proteins, and allows the virus to infect a non dividing cell. This ability to enter the nucleus is specific of lentiviruses, other retroviruses cannot and rely on cell division to access cell chromosomes. In the third step, termed strand transfer, the integrase protein joins the previously processed 3' ends to the 5' ends of strands of target cellular DNA at the site of integration. The 5'-ends are produced by integrase-catalyzed staggered cuts, 5 bp apart. A Y-shaped, gapped, recombination intermediate results, with the 5'-ends of the viral DNA strands and the 3' ends of target DNA strands remaining unjoined, flanking a gap of 5 bp. The last step is viral DNA integration into host chromosome. This involves host DNA repair synthesis in which the 5 bp gaps between the unjoined strands are filled in and then ligated. Since this process occurs at both cuts flanking the HIV genome, a 5 bp duplication of host DNA is produced at the ends of HIV-1 integration. Alternatively, Integrase may catalyze the excision of viral DNA just after strand transfer, this is termed disintegration. This chain is Gag-Pol polyprotein (gag-pol), found in Human immunodeficiency virus type 1 group M subtype B (isolate ARV2/SF2) (HIV-1).